Reading from the N-terminus, the 97-residue chain is Putative septation protein SpoVG (97 aa).

Belongs to the SpoVG family.

In terms of biological role, essential for sporulation. Interferes with or is a negative regulator of the pathway leading to asymmetric septation. The polypeptide is Putative septation protein SpoVG (Bacillus cereus (strain 03BB102)).